The sequence spans 163 residues: Staphylokinase (163 aa).

A signal peptide spans 1 to 27 (MLKRGLLFLTVLLLLFSFSSITNEVSA).

The protein belongs to the staphylokinase family.

Its subcellular location is the secreted. Its function is as follows. Potent plasminogen activator that converts plasminogen into plasmin. It forms a 1:1 complex with plasmin, which in turn activates other plasminogen molecules. The protein is Staphylokinase (sak) of Staphylococcus aureus (strain MRSA252).